The chain runs to 127 residues: Glycine cleavage system H protein (127 aa).

The 83-residue stretch at 23-105 (KVSVGITDFA…YGEGWIAVIE (83 aa)) folds into the Lipoyl-binding domain. At Lys64 the chain carries N6-lipoyllysine.

The protein belongs to the GcvH family. In terms of assembly, the glycine cleavage system is composed of four proteins: P, T, L and H. Requires (R)-lipoate as cofactor.

Functionally, the glycine cleavage system catalyzes the degradation of glycine. The H protein shuttles the methylamine group of glycine from the P protein to the T protein. The sequence is that of Glycine cleavage system H protein from Coprothermobacter proteolyticus (strain ATCC 35245 / DSM 5265 / OCM 4 / BT).